The following is a 335-amino-acid chain: 2-acylglycerol O-acyltransferase 1 (335 aa).

Transmembrane regions (helical) follow at residues 24 to 44 and 104 to 124; these read WLLS…FLII and YIFG…NFCT. 2 N-linked (GlcNAc...) asparagine glycosylation sites follow: Asn125 and Asn180.

It belongs to the diacylglycerol acyltransferase family.

Its subcellular location is the endoplasmic reticulum membrane. It catalyses the reaction a 2-acylglycerol + an acyl-CoA = a 1,2-diacylglycerol + CoA. The catalysed reaction is 2-(9Z-octadecenoyl)-glycerol + butanoyl-CoA = 1-butanoyl-2-(9Z-octadecenoyl)-glycerol + CoA. It carries out the reaction 2-(9Z-octadecenoyl)-glycerol + octanoyl-CoA = 1-octanoyl-2-(9Z-octadecenoyl)-glycerol + CoA. The enzyme catalyses 2-(9Z-octadecenoyl)-glycerol + dodecanoyl-CoA = 1-dodecanoyl-2-(9Z-octadecenoyl)-glycerol + CoA. It catalyses the reaction 2-(9Z-octadecenoyl)-glycerol + tetradecanoyl-CoA = 1-tetradecanoyl-2-(9Z-octadecenoyl)-glycerol + CoA. The catalysed reaction is 2-(9Z-octadecenoyl)-glycerol + hexadecanoyl-CoA = 1-hexadecanoyl-2-(9Z-octadecenoyl)-glycerol + CoA. It carries out the reaction 2-(9Z-octadecenoyl)-glycerol + octadecanoyl-CoA = 1-octadecanoyl-2-(9Z-octadecenoyl)-glycerol + CoA. The enzyme catalyses eicosanoyl-CoA + 2-(9Z-octadecenoyl)-glycerol = 1-eicosanoyl-2-(9Z-octadecenoyl)-glycerol + CoA. It catalyses the reaction 2-(9Z-octadecenoyl)-glycerol + (9Z)-octadecenoyl-CoA = 1,2-di-(9Z-octadecenoyl)-glycerol + CoA. The catalysed reaction is 2-(9Z-octadecenoyl)-glycerol + (9Z,12Z)-octadecadienoyl-CoA = 1-(9Z,12Z-octadecadienoyl)-2-(9Z-octadecenoyl)-glycerol + CoA. It carries out the reaction 2-(9Z-octadecenoyl)-glycerol + (5Z,8Z,11Z,14Z)-eicosatetraenoyl-CoA = 1-(5Z,8Z,11Z,14Z-eicosatetraenoyl)-2-(9Z-octadecenoyl)-glycerol + CoA. The enzyme catalyses a 2-acylglycerol + an acyl-CoA = a 1,2-diacyl-sn-glycerol + CoA. It catalyses the reaction a 2-acylglycerol + an acyl-CoA = a 2,3-diacyl-sn-glycerol + CoA. The catalysed reaction is a 1-acylglycerol + an acyl-CoA = a 1,2-diacylglycerol + CoA. It carries out the reaction 1-dodecanoylglycerol + (9Z)-octadecenoyl-CoA = 1-dodecanoyl-2-(9Z-octadecenoyl)-glycerol + CoA. The enzyme catalyses 1-tetradecanoylglycerol + (9Z)-octadecenoyl-CoA = 1-tetradecanoyl-2-(9Z-octadecenoyl)-glycerol + CoA. It catalyses the reaction 1-hexadecanoylglycerol + (9Z)-octadecenoyl-CoA = 1-hexadecanoyl-2-(9Z-octadecenoyl)-glycerol + CoA. The catalysed reaction is 1-(9Z-octadecenoyl)-glycerol + (9Z)-octadecenoyl-CoA = 1,2-di-(9Z-octadecenoyl)-glycerol + CoA. It carries out the reaction 1-(9Z,12Z-octadecadienoyl)-glycerol + (9Z)-octadecenoyl-CoA = 1-(9Z,12Z-octadecadienoyl)-2-(9Z-octadecenoyl)-glycerol + CoA. The enzyme catalyses 1-(9Z,12Z,15Z-octadecatrienoyl)-glycerol + (9Z)-octadecenoyl-CoA = 1-(9Z,12Z,15Z-octadecatrienoyl)-2-(9Z-octadecenoyl)-glycerol + CoA. It catalyses the reaction 1-(5Z,8Z,11Z,14Z-eicosatetraenoyl)-glycerol + (9Z)-octadecenoyl-CoA = 1-(5Z,8Z,11Z,14Z-eicosatetraenoyl)-2-(9Z-octadecenoyl)-glycerol + CoA. The catalysed reaction is a 1-acylglycerol + an acyl-CoA = a 1,3-diacylglycerol + CoA. It carries out the reaction 1-dodecanoylglycerol + (9Z)-octadecenoyl-CoA = 1-dodecanoyl-3-(9Z-octadecenoyl)-glycerol + CoA. The enzyme catalyses 1-hexadecanoylglycerol + (9Z)-octadecenoyl-CoA = 1-(9Z-octadecenoyl)-3-hexadecanoylglycerol + CoA. It catalyses the reaction 1-octadecanoylglycerol + (9Z)-octadecenoyl-CoA = 1-octadecanoyl-3-(9Z-octadecenoyl)-glycerol + CoA. The catalysed reaction is 1-(9Z-octadecenoyl)-sn-glycerol + (9Z)-octadecenoyl-CoA = 1,3-di-(9Z-octadecenoyl)-glycerol + CoA. It carries out the reaction 1-(9Z,12Z-octadecadienoyl)-glycerol + (9Z)-octadecenoyl-CoA = 1-(9Z-octadecenoyl)-3-(9Z,12Z-octadecadienoyl)-glycerol + CoA. The enzyme catalyses 1-(9Z,12Z,15Z-octadecatrienoyl)-glycerol + (9Z)-octadecenoyl-CoA = 1-(9Z,12Z,15Z-octadecatrienoyl)-3-(9Z-octadecenoyl)-glycerol + CoA. It catalyses the reaction a 1-acyl-sn-glycerol + an acyl-CoA = a 1,3-diacyl-sn-glycerol + CoA. The catalysed reaction is a 3-acyl-sn-glycerol + an acyl-CoA = a 1,3-diacyl-sn-glycerol + CoA. It carries out the reaction 3-octadecanoyl-sn-glycerol + (9Z)-octadecenoyl-CoA = 1-(9Z-octadecenoyl)-3-octadecanoyl-sn-glycerol + CoA. The protein operates within glycerolipid metabolism; triacylglycerol biosynthesis. Functionally, involved in glycerolipid synthesis and lipid metabolism. Catalyzes the formation of diacylglycerol, the precursor of triacylglycerol, by transferring the acyl chain of a fatty acyl-CoA to a monoacylglycerol, mainly at the sn-1 or sn-3 positions. It uses both sn-2-monoacylglycerol (2-acylglycerol) and sn-1-monoacylglycerol (1-acyl-sn-glycerol) equally well as substrates, and uses sn-3-monoacylglycerol (3-acyl-sn-glycerol) with lower efficiency. Probably not involved in absorption of dietary fat in the small intestine. The sequence is that of 2-acylglycerol O-acyltransferase 1 (MOGAT1) from Bos taurus (Bovine).